The chain runs to 851 residues: Glycogen phosphorylase, liver form (851 aa).

An N-acetylalanine modification is found at Ala-2. Ser-15 is subject to Phosphoserine; by PHK; in form phosphorylase a. AMP contacts are provided by residues 43 to 45, Tyr-76, and Arg-310; that span reads DRN. Lys-364 carries the post-translational modification N6-succinyllysine. The residue at position 470 (Lys-470) is an N6-acetyllysine. Phosphoserine is present on residues Ser-524, Ser-561, and Ser-639. Lys-681 is modified (N6-(pyridoxal phosphate)lysine). The residue at position 796 (Lys-796) is an N6-acetyllysine.

This sequence belongs to the glycogen phosphorylase family. Homodimer; enzymatically active. Interacts with PPP1R3B; recruits the phosphatase PP1 which dephosphorylates and inactivates PYGL/glycogen phosphorylase. Pyridoxal 5'-phosphate serves as cofactor. Post-translationally, acetylation, which is up-regulated by glucose and insulin and down-regulated by glucagon, inhibits the glycogen phosphorylase activity by promoting PPP1R3B-mediated recruitment of phosphatase PP1 and Ser-15 dephosphorylation. In terms of processing, phosphorylation at Ser-15 converts inactive phosphorylase b into active phosphorylase a. Dephosphorylation of Ser-15 by phosphatase PP1 inactivates the enzyme.

The protein resides in the cytoplasm. It is found in the cytosol. It carries out the reaction [(1-&gt;4)-alpha-D-glucosyl](n) + phosphate = [(1-&gt;4)-alpha-D-glucosyl](n-1) + alpha-D-glucose 1-phosphate. Its activity is regulated as follows. Allosterically regulated through the non-covalent binding of metabolites, being activated by AMP and inhibited by ATP, ADP, and glucose-6-phosphate. The activity is also controlled by post-translational modifications including phosphorylation and acetylation. Functionally, allosteric enzyme that catalyzes the rate-limiting step in glycogen catabolism, the phosphorolytic cleavage of glycogen to produce glucose-1-phosphate, and plays a central role in maintaining cellular and organismal glucose homeostasis. The sequence is that of Glycogen phosphorylase, liver form from Ovis aries (Sheep).